Reading from the N-terminus, the 102-residue chain is UPF0473 protein SERP1179 (102 aa).

Belongs to the UPF0473 family.

The chain is UPF0473 protein SERP1179 from Staphylococcus epidermidis (strain ATCC 35984 / DSM 28319 / BCRC 17069 / CCUG 31568 / BM 3577 / RP62A).